Here is a 314-residue protein sequence, read N- to C-terminus: Leucine-rich repeat-containing protein 52 (314 aa).

An N-terminal signal peptide occupies residues 1–23 (MSLASGPSSKLLLFSLGMGLVSG). The 30-residue stretch at 24-53 (SKCPNKCVCQDQEVACIDLHLTEYPADIPL) folds into the LRRNT domain. At 24–244 (SKCPNKCVCQ…MCITHLDQQD (221 aa)) the chain is on the extracellular side. Disulfide bonds link C26–C32 and C30–C39. LRR repeat units lie at residues 54-73 (NTRR…ALQL), 78-99 (DLVY…TFIG), 102-123 (RLIY…SFSV), 126-148 (NLVR…VFAN), and 151-172 (SLRY…GFHH). N-linked (GlcNAc...) asparagine glycosylation is found at N112, N131, and N148. Residues 184–238 (NPWICNCSFLDFTIHLLVSHMDHPDAQNATCTEPAELKGWPITKVGNPLQYMCIT) form the LRRCT domain. 2 disulfides stabilise this stretch: C188–C214 and C190–C236. Residues N189 and N211 are each glycosylated (N-linked (GlcNAc...) asparagine). Residues 245-265 (YIFLLLIGFCIFAAGTVAAWL) form a helical membrane-spanning segment. Over 266 to 314 (TGVCAVLYQNALRTSSGDDTEDETGSRFANQIFRSNTHLGPIRRFPELI) the chain is Cytoplasmic.

As to quaternary structure, interacts with KCNMA1. Interacts with KCNU1; this interaction may be required for LRRC52 stability and changes the channel gating properties. Post-translationally, N-glycosylated. Testis-specific (at protein level). At the mRNA level, also detected in kidney, ventricle, spinal cord and skeletal muscle, although at lower levels compared to testis. Expression in testis at the protein level requires the presence of KCNU1.

It is found in the cell membrane. In terms of biological role, auxiliary protein of the large-conductance, voltage and calcium-activated potassium channel (BK alpha). Modulates gating properties by producing a marked shift in the BK channel's voltage dependence of activation in the hyperpolarizing direction, and in the absence of calcium. KCNU1 channel auxiliary protein. Modulates KCNU1 gating properties, shifting KCNU1 gating to more negative potentials at a given pH. The protein is Leucine-rich repeat-containing protein 52 (Lrrc52) of Mus musculus (Mouse).